Consider the following 41-residue polypeptide: Large ribosomal subunit protein bL36 (41 aa).

Belongs to the bacterial ribosomal protein bL36 family.

In Hydrogenovibrio crunogenus (strain DSM 25203 / XCL-2) (Thiomicrospira crunogena), this protein is Large ribosomal subunit protein bL36.